The primary structure comprises 277 residues: Undecaprenyl-diphosphatase (277 aa).

The next 5 helical transmembrane spans lie at 83 to 103 (FALNIIIAFLPAALLGLVFAS), 109 to 129 (LFAPVPVAIAFIVGGFIILWI), 188 to 208 (ATEFSFFLAIPTLMGATVYSV), 218 to 238 (ADIPLFGLGGFAAFVSAFLCV), and 256 to 276 (YRIVFGLFVLLSAYYGWVVWA).

The protein belongs to the UppP family.

The protein localises to the cell inner membrane. The enzyme catalyses di-trans,octa-cis-undecaprenyl diphosphate + H2O = di-trans,octa-cis-undecaprenyl phosphate + phosphate + H(+). Functionally, catalyzes the dephosphorylation of undecaprenyl diphosphate (UPP). Confers resistance to bacitracin. In Janthinobacterium sp. (strain Marseille) (Minibacterium massiliensis), this protein is Undecaprenyl-diphosphatase.